The following is a 38-amino-acid chain: Photosystem II reaction center protein X 2 (38 aa).

A helical transmembrane segment spans residues 8–28 (FLWSLVYGAVVLGLLFGAIVF).

Belongs to the PsbX family. Type 1 subfamily. As to quaternary structure, PSII is composed of 1 copy each of membrane proteins PsbA, PsbB, PsbC, PsbD, PsbE, PsbF, PsbH, PsbI, PsbJ, PsbK, PsbL, PsbM, PsbT, PsbX, PsbY, PsbZ, Psb30/Ycf12, peripheral proteins PsbO, CyanoQ (PsbQ), PsbU, PsbV and a large number of cofactors. It forms dimeric complexes.

It localises to the cellular thylakoid membrane. In terms of biological role, involved in the binding and/or turnover of quinones at the Q(B) site of photosystem II (PSII). PSII is a light-driven water plastoquinone oxidoreductase, using light energy to abstract electrons from H(2)O, generating a proton gradient subsequently used for ATP formation. This chain is Photosystem II reaction center protein X 2, found in Synechococcus sp. (strain JA-3-3Ab) (Cyanobacteria bacterium Yellowstone A-Prime).